The chain runs to 120 residues: Cell division protein FtsL (120 aa).

The Cytoplasmic segment spans residues methionine 1–arginine 36. Residues isoleucine 37–isoleucine 57 form a helical membrane-spanning segment. Over glycine 58–lysine 120 the chain is Extracellular.

It belongs to the FtsL family.

It localises to the cell membrane. Its function is as follows. Essential cell division protein. The polypeptide is Cell division protein FtsL (Bacillus cereus (strain ATCC 14579 / DSM 31 / CCUG 7414 / JCM 2152 / NBRC 15305 / NCIMB 9373 / NCTC 2599 / NRRL B-3711)).